Reading from the N-terminus, the 1699-residue chain is MYSNNQLDNPNHSRSQYRNGDQSGIYAGSDEEFQVLVRKSDLDDVDEVLKIIAQHEREANDLLYDYPNLLSLFEKNYLSVTILNQQQQIIGAAVFNDFPQGLTGQIDFQHENFWENWIFDAFNFDESICITPFNTLWMTFFFVAKDQYKFSQEEELIICQKVFQNVYATLPQLEGILFLKRGETMEDNGAQAQISSILENIFIEVPVKDRDIIKRVRGIHLNSEVFYSPKHACQEIIEIRMAREQDHDDLAEIFNRQSEVLTAQFGEFFIADLIATQNLTRRGTRKFLNNGKAIVGQVRDKAVGLMSISTDIDYKFLAQCFELETYDNLFKPDFMEAIQNKRDDIRRENQYREEDQYQEIVKKMNEERMKSHFIGQRMTLQQHCREKEQEIVMKIDEIINNDAIQKNLTKKQVEEFLDEWLRGYELHQPSDLFYQYPHIFPNTQSIILTPRQLLIETLEFFGLPQHYMNGAGHWKDWVQKKMEEKRIAQLKRPQKKVTKRPKRQKEEDKKEDEFKPPSYFDLTPFQSAFKKFLAVNPEGRTIFRQKIEASMKVIKMMFCNENGEMKEERHVDLNDLGNELNKQKMDIAPEVCENLASFLECFGEIKYEEEIIMVNPPKEDTNQNAKIAQTKKMFASEQTESKPIPKLLKKTSFQEFFDAVYKMKEFDIMMNRLDITKSTTLKAEVSQIVKEEAQQEKAKQEKRRIERSPNPYDDYVKNLKDLDSIPEVPIDAQNAIVINLFCIDENFESRSLDFVEYAFSIFGDRDYIILTQPFTVPETTLLQQFIKIPMKKNSTFDHVLYIYHKDCLLSNTLFIRKSKLEDMQYVAPLFSNLINKQQIYDDTLEAITQTASRKVAFSVFCDQSLIGIYVVSKNVNLDYYISHFCVQDHIILKEHPMTCHTKLIHTALNPLFTKNTRFILKEILRLMNKTCMYFEVQEKTLLPDVFNELVFVRARQFPHFLKRKWDFEHDKEHFERAGDLTEVQDGKRDAFDQEQAPFSLSVITKKMMSSVKVNNNTRIVVVGASDTGISFIESLLSVKDINFTHITLLAPGGIMTMHINLPGDQLKALSTNYTLEELKNLMLDARVNVLDAKMVELDKKGKKIKLDKNAELPYDYLVNTVGLIDTELQNRRLISTGLFSSPYYQQLLDKYGRDRAQIEEGAPPIFGQHPVYGNYVQGVYSIDDPYLYEEFKKTGKKDSNIDLLTRKKRPQSITIYGRTLHTIAFISGMVNRGVHPNRIHYVIPPKVFETQVQFKNNTERLIYEDKRINDPDPFDDPSVEQKIFEFMESKGIQVHKGYNLHQIDVDEETRICQGVVFRKKADNYEEIIQQIEIKKQQILERDANSENADKGFDDTQSRDGDEENQPITLEQEIEELERNKFDDIEITSRFLVTSGLVDIDKEIFYIIHENGLVYNGRLIVKSNFQTTEKDIFCCGKICEFSQRYKRLSIGRSLRLDKYNGRELGQKLAKCLLDSLDLGYLTDQIYSLGELPNLYMPIGIGAFLPGDLFYYHIKKNDYARPSKTMEAEDNRQDIVSDNIDQKQQIGHYIKFKFDNNGIIDQVTYLGTEPVSVQSLVSFVGLSEKCLNQLDVRFKNGLIPNISEFLSENWAIGLYHEWFSEFRHITKMEMLQSENIQQILDEAAKYAQGGGFLDPEFIEKIKAKISPEIISQIQQGTLDFIRENQNHLPMYYVPPKKVNVD.

Residues 1-22 are compositionally biased toward polar residues; the sequence is MYSNNQLDNPNHSRSQYRNGDQ. 3 disordered regions span residues 1 to 23, 489 to 515, and 1340 to 1365; these read MYSN…GDQS, QLKR…DEFK, and ERDA…EENQ. The span at 489–503 shows a compositional bias: basic residues; that stretch reads QLKRPQKKVTKRPKR. Basic and acidic residues-rich tracts occupy residues 504 to 515 and 1340 to 1359; these read QKEEDKKEDEFK and ERDA…QSRD.

It localises to the cell projection. It is found in the cilium. In terms of biological role, as component of a spoke-associated complex, regulates ciliary mobility by mediating a stable and functional assembly of the radial spoke 3 (RS3). This chain is Cilia- and flagella-associated protein 61, found in Tetrahymena thermophila (strain SB210).